A 364-amino-acid chain; its full sequence is Uroporphyrinogen decarboxylase (364 aa).

Substrate-binding positions include 28–32 (RQAGR), aspartate 78, tyrosine 160, threonine 215, and histidine 333.

The protein belongs to the uroporphyrinogen decarboxylase family. In terms of assembly, homodimer.

The protein resides in the cytoplasm. The enzyme catalyses uroporphyrinogen III + 4 H(+) = coproporphyrinogen III + 4 CO2. Its pathway is porphyrin-containing compound metabolism; protoporphyrin-IX biosynthesis; coproporphyrinogen-III from 5-aminolevulinate: step 4/4. Its function is as follows. Catalyzes the decarboxylation of four acetate groups of uroporphyrinogen-III to yield coproporphyrinogen-III. The sequence is that of Uroporphyrinogen decarboxylase from Burkholderia thailandensis (strain ATCC 700388 / DSM 13276 / CCUG 48851 / CIP 106301 / E264).